A 336-amino-acid polypeptide reads, in one-letter code: Fructose-1,6-bisphosphatase class 1 (336 aa).

The Mg(2+) site is built by glutamate 90, aspartate 112, leucine 114, and aspartate 115. Substrate contacts are provided by residues 115–118, asparagine 211, and lysine 277; that span reads DGSS. Glutamate 283 provides a ligand contact to Mg(2+).

The protein belongs to the FBPase class 1 family. As to quaternary structure, homotetramer. Mg(2+) is required as a cofactor.

Its subcellular location is the cytoplasm. The catalysed reaction is beta-D-fructose 1,6-bisphosphate + H2O = beta-D-fructose 6-phosphate + phosphate. The protein operates within carbohydrate biosynthesis; gluconeogenesis. The chain is Fructose-1,6-bisphosphatase class 1 from Pseudomonas fluorescens (strain ATCC BAA-477 / NRRL B-23932 / Pf-5).